Here is a 311-residue protein sequence, read N- to C-terminus: Methionyl-tRNA formyltransferase (311 aa).

(6S)-5,6,7,8-tetrahydrofolate is bound at residue 117-120 (SLLP).

Belongs to the Fmt family.

It catalyses the reaction L-methionyl-tRNA(fMet) + (6R)-10-formyltetrahydrofolate = N-formyl-L-methionyl-tRNA(fMet) + (6S)-5,6,7,8-tetrahydrofolate + H(+). Its function is as follows. Attaches a formyl group to the free amino group of methionyl-tRNA(fMet). The formyl group appears to play a dual role in the initiator identity of N-formylmethionyl-tRNA by promoting its recognition by IF2 and preventing the misappropriation of this tRNA by the elongation apparatus. The polypeptide is Methionyl-tRNA formyltransferase (Bordetella avium (strain 197N)).